Here is a 154-residue protein sequence, read N- to C-terminus: Transcriptional repressor NrdR (154 aa).

The segment at 3–34 (CPFCGANDTKVIDSRLVAEGEQVRRRRECVAC) is a zinc-finger region. The ATP-cone domain maps to 49–139 (PRLIKQDGTR…VYRRFQDLDE (91 aa)).

Belongs to the NrdR family. The cofactor is Zn(2+).

Negatively regulates transcription of bacterial ribonucleotide reductase nrd genes and operons by binding to NrdR-boxes. This is Transcriptional repressor NrdR from Pseudomonas entomophila (strain L48).